Consider the following 158-residue polypeptide: UPAR/Ly6 domain-containing protein crim (158 aa).

The N-terminal stretch at 1 to 22 is a signal peptide; sequence MHYHTNLIAALLLAALIHEGSA. The Extracellular portion of the chain corresponds to 23–136; it reads IWCYRCTSAT…FCFLDHRCNG (114 aa). An N-linked (GlcNAc...) asparagine glycan is attached at Asn107. A lipid anchor (GPI-anchor amidated asparagine) is attached at Asn135. Positions 136–158 are cleaved as a propeptide — removed in mature form; that stretch reads GASGLQTSAVIGLLTLIPALLLR. A helical membrane pass occupies residues 137-157; sequence ASGLQTSAVIGLLTLIPALLL. A topological domain (cytoplasmic) is located at residue Arg158.

The protein belongs to the quiver family.

It is found in the membrane. Required for septate junction assembly possibly by organizing the preassembly and transport of septate junction proteins. Involved in epithelial cell septate junction-mediated paracellular barrier functions of trachea, hindgut and salivary gland. In Drosophila melanogaster (Fruit fly), this protein is UPAR/Ly6 domain-containing protein crim.